Reading from the N-terminus, the 118-residue chain is Large ribosomal subunit protein bL20 (118 aa).

Belongs to the bacterial ribosomal protein bL20 family.

Its function is as follows. Binds directly to 23S ribosomal RNA and is necessary for the in vitro assembly process of the 50S ribosomal subunit. It is not involved in the protein synthesizing functions of that subunit. This chain is Large ribosomal subunit protein bL20, found in Ectopseudomonas mendocina (strain ymp) (Pseudomonas mendocina).